A 398-amino-acid chain; its full sequence is Phosphoglycerate kinase (398 aa).

Residues 23–25 (DFN), Arg-38, 61–64 (HMGK), Arg-122, and Arg-155 contribute to the substrate site. Residues Lys-206, Gly-297, Glu-328, and 354-357 (GGDS) each bind ATP.

Belongs to the phosphoglycerate kinase family. In terms of assembly, monomer.

The protein localises to the cytoplasm. The catalysed reaction is (2R)-3-phosphoglycerate + ATP = (2R)-3-phospho-glyceroyl phosphate + ADP. The protein operates within carbohydrate degradation; glycolysis; pyruvate from D-glyceraldehyde 3-phosphate: step 2/5. This is Phosphoglycerate kinase from Clostridium botulinum (strain Langeland / NCTC 10281 / Type F).